The primary structure comprises 458 residues: Adenylosuccinate synthetase (458 aa).

GTP contacts are provided by residues 11 to 17 (GDEGKGG) and 39 to 41 (GHT). D12 acts as the Proton acceptor in catalysis. The Mg(2+) site is built by D12 and G39. Residues 12 to 15 (DEGK), 37 to 40 (NAGH), T127, R141, Q232, T247, and R330 each bind IMP. H40 (proton donor) is an active-site residue. A substrate-binding site is contributed by 326–332 (TVTGRPR). Residues R332, 358–360 (HLD), and 443–445 (GVG) contribute to the GTP site.

The protein belongs to the adenylosuccinate synthetase family. As to quaternary structure, homodimer. The cofactor is Mg(2+).

It is found in the cytoplasm. The enzyme catalyses IMP + L-aspartate + GTP = N(6)-(1,2-dicarboxyethyl)-AMP + GDP + phosphate + 2 H(+). It participates in purine metabolism; AMP biosynthesis via de novo pathway; AMP from IMP: step 1/2. Functionally, plays an important role in the de novo pathway of purine nucleotide biosynthesis. Catalyzes the first committed step in the biosynthesis of AMP from IMP. The sequence is that of Adenylosuccinate synthetase from Haloarcula marismortui (strain ATCC 43049 / DSM 3752 / JCM 8966 / VKM B-1809) (Halobacterium marismortui).